A 326-amino-acid chain; its full sequence is Histone-lysine N-methyltransferase Suv4-20 (326 aa).

The region spanning 163–273 (QECTRYSLEG…AGDEITCFYG (111 aa)) is the SET domain. Residues 294–313 (RGKFSTSDEEENDEPSALSE) are disordered.

It belongs to the class V-like SAM-binding methyltransferase superfamily. Histone-lysine methyltransferase family. Suvar4-20 subfamily.

It is found in the nucleus. Its subcellular location is the chromosome. The catalysed reaction is N(6)-methyl-L-lysyl(20)-[histone H4] + S-adenosyl-L-methionine = N(6),N(6)-dimethyl-L-lysyl(20)-[histone H4] + S-adenosyl-L-homocysteine + H(+). It catalyses the reaction N(6),N(6)-dimethyl-L-lysyl(20)-[histone H4] + S-adenosyl-L-methionine = N(6),N(6),N(6)-trimethyl-L-lysyl(20)-[histone H4] + S-adenosyl-L-homocysteine + H(+). Histone methyltransferase that specifically di- and trimethylates 'Lys-20' of histone H4 (H4K20me2/me3). H4 'Lys-20' trimethylation represents a specific tag for epigenetic transcriptional repression. Contributes to dosage compensation of X chromosome-relative to autosome-linked gene expression, possibly by converting H4K20me1 to H4K20m2/me3 on autosomes. Involved in the regulation of growth and body fat metabolism downstream of the TOR complex 2 pathway. In Caenorhabditis briggsae, this protein is Histone-lysine N-methyltransferase Suv4-20.